A 357-amino-acid chain; its full sequence is Ribosomal RNA large subunit methyltransferase M (357 aa).

Residues Ser-183, 216–219 (APGG), Asp-235, Asp-255, and Asp-271 each bind S-adenosyl-L-methionine. The active-site Proton acceptor is the Lys-300.

Belongs to the class I-like SAM-binding methyltransferase superfamily. RNA methyltransferase RlmE family. RlmM subfamily. In terms of assembly, monomer.

It is found in the cytoplasm. The enzyme catalyses cytidine(2498) in 23S rRNA + S-adenosyl-L-methionine = 2'-O-methylcytidine(2498) in 23S rRNA + S-adenosyl-L-homocysteine + H(+). Its function is as follows. Catalyzes the 2'-O-methylation at nucleotide C2498 in 23S rRNA. This is Ribosomal RNA large subunit methyltransferase M from Pseudomonas fluorescens (strain ATCC BAA-477 / NRRL B-23932 / Pf-5).